The primary structure comprises 168 residues: MPLLDSFKVDHTRMHAPAVRVAKTMTTPKGDTITVFDLRFCIPNKEILPEKGIHTLEHLFAGFMRDHLNGAGVEIIDISPMGCRTGFYMSLIGTPSEQQVADAWLASMQDVLNVKDQSKIPELNEYQCGTYLMHSLAEAQQIAQNVLARKVAVNRNGDLALDESLLNA.

3 residues coordinate Fe cation: histidine 54, histidine 58, and cysteine 128.

This sequence belongs to the LuxS family. In terms of assembly, homodimer. The cofactor is Fe cation.

The enzyme catalyses S-(5-deoxy-D-ribos-5-yl)-L-homocysteine = (S)-4,5-dihydroxypentane-2,3-dione + L-homocysteine. Its function is as follows. Involved in the synthesis of autoinducer 2 (AI-2) which is secreted by bacteria and is used to communicate both the cell density and the metabolic potential of the environment. The regulation of gene expression in response to changes in cell density is called quorum sensing. Catalyzes the transformation of S-ribosylhomocysteine (RHC) to homocysteine (HC) and 4,5-dihydroxy-2,3-pentadione (DPD). This Neisseria gonorrhoeae (strain ATCC 700825 / FA 1090) protein is S-ribosylhomocysteine lyase.